The primary structure comprises 121 residues: Small ribosomal subunit protein uS13 (121 aa).

The interval 92-121 (RKGLPMRGQRTRTNARTRKGPRRAAQALKK) is disordered.

It belongs to the universal ribosomal protein uS13 family. In terms of assembly, part of the 30S ribosomal subunit. Forms a loose heterodimer with protein S19. Forms two bridges to the 50S subunit in the 70S ribosome.

Its function is as follows. Located at the top of the head of the 30S subunit, it contacts several helices of the 16S rRNA. In the 70S ribosome it contacts the 23S rRNA (bridge B1a) and protein L5 of the 50S subunit (bridge B1b), connecting the 2 subunits; these bridges are implicated in subunit movement. Contacts the tRNAs in the A and P-sites. This chain is Small ribosomal subunit protein uS13, found in Burkholderia thailandensis (strain ATCC 700388 / DSM 13276 / CCUG 48851 / CIP 106301 / E264).